Consider the following 95-residue polypeptide: Large ribosomal subunit protein bL27 (95 aa).

Positions 1 to 25 (MAHKKGTGSTRNGRDSNAQRLGVKR) are disordered. Polar residues predominate over residues 7–19 (TGSTRNGRDSNAQ).

Belongs to the bacterial ribosomal protein bL27 family.

In Gloeobacter violaceus (strain ATCC 29082 / PCC 7421), this protein is Large ribosomal subunit protein bL27.